A 198-amino-acid chain; its full sequence is Dual specificity protein phosphatase 14 (198 aa).

One can recognise a Tyrosine-protein phosphatase domain in the interval 26 to 167 (GIAQITSSLF…LIDYERQLFG (142 aa)). Cysteine 111 serves as the catalytic Phosphocysteine intermediate.

This sequence belongs to the protein-tyrosine phosphatase family. Non-receptor class dual specificity subfamily. Interacts with CD28.

It catalyses the reaction O-phospho-L-tyrosyl-[protein] + H2O = L-tyrosyl-[protein] + phosphate. It carries out the reaction O-phospho-L-seryl-[protein] + H2O = L-seryl-[protein] + phosphate. The enzyme catalyses O-phospho-L-threonyl-[protein] + H2O = L-threonyl-[protein] + phosphate. Involved in the inactivation of MAP kinases. Dephosphorylates ERK, JNK and p38 MAP-kinases. Plays a negative role in TCR signaling by dephosphorylating MAP3K7 adapter TAB1 leading to its inactivation. The sequence is that of Dual specificity protein phosphatase 14 (DUSP14) from Homo sapiens (Human).